Here is a 102-residue protein sequence, read N- to C-terminus: Protein Tat (102 aa).

The segment at 1 to 24 is interaction with human CREBBP; the sequence is MEPVDPRLEPWKHPGSQPKTACNN. Residues 1–48 are transactivation; it reads MEPVDPRLEPWKHPGSQPKTACNNCYCKKCCYHCQVCFLTKGLGISYG. Residues C22, C25, and C27 each coordinate Zn(2+). The interval 22–37 is cysteine-rich; sequence CNNCYCKKCCYHCQVC. N6-acetyllysine; by host PCAF is present on K28. Residues C30, H33, C34, and C37 each contribute to the Zn(2+) site. The interval 38–48 is core; the sequence is FLTKGLGISYG. Residues 48–102 are disordered; that stretch reads GRKKRRQRRGPPQGSQTHQVSLSKQPTSQPRGDPTGPKESKEKVERETETDPAVQ. Positions 49–57 match the Nuclear localization signal, RNA-binding (TAR), and protein transduction motif; that stretch reads RKKRRQRRG. The segment at 49-86 is interaction with the host capping enzyme RNGTT; the sequence is RKKRRQRRGPPQGSQTHQVSLSKQPTSQPRGDPTGPKE. Residues K50 and K51 each carry the N6-acetyllysine; by host EP300 and GCN5L2 modification. Asymmetric dimethylarginine; by host PRMT6 occurs at positions 52 and 53. The span at 62–77 shows a compositional bias: polar residues; sequence SQTHQVSLSKQPTSQP. A Glycyl lysine isopeptide (Lys-Gly) (interchain with G-Cter in ubiquitin) cross-link involves residue K71. A Cell attachment site motif is present at residues 78–80; that stretch reads RGD. The span at 83-96 shows a compositional bias: basic and acidic residues; sequence GPKESKEKVERETE.

This sequence belongs to the lentiviruses Tat family. In terms of assembly, interacts with host CCNT1. Associates with the P-TEFb complex composed at least of Tat, P-TEFb (CDK9 and CCNT1), TAR RNA, RNA Pol II. Recruits the HATs CREBBP, TAF1/TFIID, EP300, PCAF and GCN5L2. Interacts with host KAT5/Tip60; this interaction targets the latter to degradation. Interacts with the host deacetylase SIRT1. Interacts with host capping enzyme RNGTT; this interaction stimulates RNGTT. Binds to host KDR, and to the host integrins ITGAV/ITGB3 and ITGA5/ITGB1. Interacts with host KPNB1/importin beta-1 without previous binding to KPNA1/importin alpha-1. Interacts with EIF2AK2. Interacts with host nucleosome assembly protein NAP1L1; this interaction may be required for the transport of Tat within the nucleus, since the two proteins interact at the nuclear rim. Interacts with host C1QBP/SF2P32; this interaction involves lysine-acetylated Tat. Interacts with the host chemokine receptors CCR2, CCR3 and CXCR4. Interacts with host DPP4/CD26; this interaction may trigger an anti-proliferative effect. Interacts with host LDLR. Interacts with the host extracellular matrix metalloproteinase MMP1. Interacts with host PRMT6; this interaction mediates Tat's methylation. Interacts with, and is ubiquitinated by MDM2/Hdm2. Interacts with host PSMC3 and HTATIP2. Interacts with STAB1; this interaction may overcome SATB1-mediated repression of IL2 and IL2RA (interleukin) in T cells by binding to the same domain than HDAC1. Interacts (when acetylated) with human CDK13, thereby increasing HIV-1 mRNA splicing and promoting the production of the doubly spliced HIV-1 protein Nef. Interacts with host TBP; this interaction modulates the activity of transcriptional pre-initiation complex. Interacts with host RELA. Interacts with host PLSCR1; this interaction negatively regulates Tat transactivation activity by altering its subcellular distribution. In terms of processing, asymmetrical arginine methylation by host PRMT6 seems to diminish the transactivation capacity of Tat and affects the interaction with host CCNT1. Acetylation by EP300, CREBBP, GCN5L2/GCN5 and PCAF regulates the transactivation activity of Tat. EP300-mediated acetylation of Lys-50 promotes dissociation of Tat from the TAR RNA through the competitive binding to PCAF's bromodomain. In addition, the non-acetylated Tat's N-terminus can also interact with PCAF. PCAF-mediated acetylation of Lys-28 enhances Tat's binding to CCNT1. Lys-50 is deacetylated by SIRT1. Post-translationally, polyubiquitination by host MDM2 does not target Tat to degradation, but activates its transactivation function and fosters interaction with CCNT1 and TAR RNA. In terms of processing, phosphorylated by EIF2AK2 on serine and threonine residues adjacent to the basic region important for TAR RNA binding and function. Phosphorylation of Tat by EIF2AK2 is dependent on the prior activation of EIF2AK2 by dsRNA.

The protein resides in the host nucleus. The protein localises to the host nucleolus. It localises to the host cytoplasm. It is found in the secreted. Transcriptional activator that increases RNA Pol II processivity, thereby increasing the level of full-length viral transcripts. Recognizes a hairpin structure at the 5'-LTR of the nascent viral mRNAs referred to as the transactivation responsive RNA element (TAR) and recruits the cyclin T1-CDK9 complex (P-TEFb complex) that will in turn hyperphosphorylate the RNA polymerase II to allow efficient elongation. The CDK9 component of P-TEFb and other Tat-activated kinases hyperphosphorylate the C-terminus of RNA Pol II that becomes stabilized and much more processive. Other factors such as HTATSF1/Tat-SF1, SUPT5H/SPT5, and HTATIP2 are also important for Tat's function. Besides its effect on RNA Pol II processivity, Tat induces chromatin remodeling of proviral genes by recruiting the histone acetyltransferases (HATs) CREBBP, EP300 and PCAF to the chromatin. This also contributes to the increase in proviral transcription rate, especially when the provirus integrates in transcriptionally silent region of the host genome. To ensure maximal activation of the LTR, Tat mediates nuclear translocation of NF-kappa-B by interacting with host RELA. Through its interaction with host TBP, Tat may also modulate transcription initiation. Tat can reactivate a latently infected cell by penetrating in it and transactivating its LTR promoter. In the cytoplasm, Tat is thought to act as a translational activator of HIV-1 mRNAs. Its function is as follows. Extracellular circulating Tat can be endocytosed by surrounding uninfected cells via the binding to several surface receptors such as CD26, CXCR4, heparan sulfate proteoglycans (HSPG) or LDLR. Neurons are rarely infected, but they internalize Tat via their LDLR. Through its interaction with nuclear HATs, Tat is potentially able to control the acetylation-dependent cellular gene expression. Modulates the expression of many cellular genes involved in cell survival, proliferation or in coding for cytokines or cytokine receptors. Tat plays a role in T-cell and neurons apoptosis. Tat induced neurotoxicity and apoptosis probably contribute to neuroAIDS. Circulating Tat also acts as a chemokine-like and/or growth factor-like molecule that binds to specific receptors on the surface of the cells, affecting many cellular pathways. In the vascular system, Tat binds to ITGAV/ITGB3 and ITGA5/ITGB1 integrins dimers at the surface of endothelial cells and competes with bFGF for heparin-binding sites, leading to an excess of soluble bFGF. The chain is Protein Tat from Human immunodeficiency virus type 1 group M subtype B (isolate RF/HAT3) (HIV-1).